The following is a 414-amino-acid chain: 26S proteasome regulatory subunit 6B homolog (414 aa).

Residues 1 to 33 (MAATMVLDPKPSSTPPPTLPNPYTTDSQSTDSE) are disordered. The span at 21–30 (NPYTTDSQST) shows a compositional bias: low complexity. Residues 55–81 (EYVKDELKNLKREQLRSQEEVKRIQSV) are a coiled coil. Residue 202 to 209 (GPPGTGKT) participates in ATP binding.

The protein belongs to the AAA ATPase family.

It localises to the cytoplasm. Its subcellular location is the nucleus. Its function is as follows. The 26S proteasome is involved in the ATP-dependent degradation of ubiquitinated proteins. The regulatory (or ATPase) complex confers ATP dependency and substrate specificity to the 26S complex. This Helianthus annuus (Common sunflower) protein is 26S proteasome regulatory subunit 6B homolog.